A 281-amino-acid polypeptide reads, in one-letter code: Hydroxyethylthiazole kinase (281 aa).

Residues R124 and S169 each coordinate ATP.

It belongs to the Thz kinase family. Requires Mg(2+) as cofactor.

The enzyme catalyses 5-(2-hydroxyethyl)-4-methylthiazole + ATP = 4-methyl-5-(2-phosphooxyethyl)-thiazole + ADP + H(+). The protein operates within cofactor biosynthesis; thiamine diphosphate biosynthesis; 4-methyl-5-(2-phosphoethyl)-thiazole from 5-(2-hydroxyethyl)-4-methylthiazole: step 1/1. Its function is as follows. Catalyzes the phosphorylation of the hydroxyl group of 4-methyl-5-beta-hydroxyethylthiazole (THZ). This is Hydroxyethylthiazole kinase from Rhodococcus erythropolis (strain PR4 / NBRC 100887).